A 638-amino-acid polypeptide reads, in one-letter code: ATP-dependent zinc metalloprotease FtsH (638 aa).

The Cytoplasmic portion of the chain corresponds to 1-11; it reads MSQKGKNKKWR. The helical transmembrane segment at 12-32 threads the bilayer; sequence SAGLYALLAIVLISLATTFLG. Residues 33–114 are Lumenal-facing; that stretch reads NRPPERLEIS…LAVRPVQEEG (82 aa). A helical transmembrane segment spans residues 115–135; sequence LLGRILSTFFLPVLLLLGLFF. Residues 136–638 lie on the Cytoplasmic side of the membrane; sequence LLRRAQNGPG…TLPMAVNAGA (503 aa). 209–216 contributes to the ATP binding site; sequence GPPGTGKT. Residue histidine 431 coordinates Zn(2+). Glutamate 432 is an active-site residue. The Zn(2+) site is built by histidine 435 and aspartate 510.

In the central section; belongs to the AAA ATPase family. It in the C-terminal section; belongs to the peptidase M41 family. In terms of assembly, homohexamer. It depends on Zn(2+) as a cofactor.

The protein localises to the cellular thylakoid membrane. Functionally, acts as a processive, ATP-dependent zinc metallopeptidase for both cytoplasmic and membrane proteins. Plays a role in the quality control of integral membrane proteins. The polypeptide is ATP-dependent zinc metalloprotease FtsH (Synechococcus sp. (strain JA-2-3B'a(2-13)) (Cyanobacteria bacterium Yellowstone B-Prime)).